The following is an 816-amino-acid chain: uncharacterized protein (816 aa).

Disordered stretches follow at residues 1–81 and 391–411; these read MDVV…NSNN and LGSN…NNDF. Residues 28–44 are compositionally biased toward low complexity; that stretch reads EVPPQRPRQQNRWKPWW. Residues 64-81 are compositionally biased toward polar residues; sequence QGRSSPTTDFQDSVNSNN. Residues Ser76 and Ser79 each carry the phosphoserine modification. The segment covering 391–400 has biased composition (low complexity); the sequence is LGSNSSTNEN.

This is an uncharacterized protein from Saccharomyces cerevisiae (strain ATCC 204508 / S288c) (Baker's yeast).